Consider the following 104-residue polypeptide: ATP-dependent Clp protease adapter protein ClpS (104 aa).

The interval 1 to 20 (MAEETPTRSPGGAAVLDKAP) is disordered.

The protein belongs to the ClpS family. As to quaternary structure, binds to the N-terminal domain of the chaperone ClpA.

Its function is as follows. Involved in the modulation of the specificity of the ClpAP-mediated ATP-dependent protein degradation. The polypeptide is ATP-dependent Clp protease adapter protein ClpS (Synechococcus sp. (strain CC9902)).